A 377-amino-acid chain; its full sequence is MFMQDSDSIGIVSARRVHFDTPLSLKSRAVLDSYELVYETYGELNPERSNAILVCHALSGNHHVAGVYADNPKNTGWWNNMIGPGKPIDTRKFFVIGINNLGGCHGSTGPISINNRTGKRYGPDFPLVTTSDWAKTYVRFADQFGIDCFAAIIGGSLGGMSAMQLALDAPERVRHVAVIAASARLTAQNIAFNDVARQAILTDPDFHGGDYYSHGTHPRRGLRLARMLGHITYLSDDSMASKFGRELRNGSLAFNYDVEFQIESYLHYQGDKFADLFDANTYLLMTKALDYFDPAQDYDGNLSAAFARAQADFLVLSFTSDWRFSPERSREIVKALLDNKLNVSYAEIPSTYGHDSFLMQDDYYHQLVRAYMDNISI.

Residues asparagine 50 to leucine 358 form the AB hydrolase-1 domain. Serine 156 acts as the Nucleophile in catalysis. Arginine 226 is a binding site for substrate. Residues aspartate 321 and histidine 354 contribute to the active site. Aspartate 355 is a binding site for substrate.

The protein belongs to the AB hydrolase superfamily. MetX family. As to quaternary structure, homodimer.

Its subcellular location is the cytoplasm. It carries out the reaction L-homoserine + succinyl-CoA = O-succinyl-L-homoserine + CoA. Its pathway is amino-acid biosynthesis; L-methionine biosynthesis via de novo pathway; O-succinyl-L-homoserine from L-homoserine: step 1/1. Transfers a succinyl group from succinyl-CoA to L-homoserine, forming succinyl-L-homoserine. The protein is Homoserine O-succinyltransferase of Nitrosomonas eutropha (strain DSM 101675 / C91 / Nm57).